The chain runs to 196 residues: Holliday junction branch migration complex subunit RuvA (196 aa).

The interval 1-63 (MIASVRGEVL…EDSMTLYGFP (63 aa)) is domain I. The interval 64–138 (DGETRDLFLT…DKVGVAATGG (75 aa)) is domain II. The flexible linker stretch occupies residues 138 to 142 (GALST). Residues 143-196 (NGHAVRSPVVEALVGLGFAAKQAEEATDTVLAANHDATTSSALRSALSLLGKAR) are domain III.

It belongs to the RuvA family. In terms of assembly, homotetramer. Forms an RuvA(8)-RuvB(12)-Holliday junction (HJ) complex. HJ DNA is sandwiched between 2 RuvA tetramers; dsDNA enters through RuvA and exits via RuvB. An RuvB hexamer assembles on each DNA strand where it exits the tetramer. Each RuvB hexamer is contacted by two RuvA subunits (via domain III) on 2 adjacent RuvB subunits; this complex drives branch migration. In the full resolvosome a probable DNA-RuvA(4)-RuvB(12)-RuvC(2) complex forms which resolves the HJ.

The protein localises to the cytoplasm. Functionally, the RuvA-RuvB-RuvC complex processes Holliday junction (HJ) DNA during genetic recombination and DNA repair, while the RuvA-RuvB complex plays an important role in the rescue of blocked DNA replication forks via replication fork reversal (RFR). RuvA specifically binds to HJ cruciform DNA, conferring on it an open structure. The RuvB hexamer acts as an ATP-dependent pump, pulling dsDNA into and through the RuvAB complex. HJ branch migration allows RuvC to scan DNA until it finds its consensus sequence, where it cleaves and resolves the cruciform DNA. The polypeptide is Holliday junction branch migration complex subunit RuvA (Mycobacterium bovis (strain ATCC BAA-935 / AF2122/97)).